The chain runs to 447 residues: D-ribitol-5-phosphate cytidylyltransferase (447 aa).

It belongs to the IspD/TarI cytidylyltransferase family. IspD subfamily. Homodimer.

It is found in the cytoplasm. Its subcellular location is the cytosol. The catalysed reaction is D-ribitol 5-phosphate + CTP + H(+) = CDP-L-ribitol + diphosphate. It catalyses the reaction D-ribose 5-phosphate + CTP + H(+) = CDP-D-ribose + diphosphate. It carries out the reaction D-ribulose 5-phosphate + CTP + H(+) = CDP-D-ribulose + diphosphate. It participates in protein modification; protein glycosylation. Cytidylyltransferase required for protein O-linked mannosylation. Catalyzes the formation of CDP-ribitol nucleotide sugar from D-ribitol 5-phosphate. CDP-ribitol is a substrate of FKTN during the biosynthesis of the phosphorylated O-mannosyl trisaccharide (N-acetylgalactosamine-beta-3-N-acetylglucosamine-beta-4-(phosphate-6-)mannose), a carbohydrate structure present in alpha-dystroglycan (DAG1), which is required for binding laminin G-like domain-containing extracellular proteins with high affinity. Shows activity toward other pentose phosphate sugars and mediates formation of CDP-ribulose or CDP-ribose using CTP and ribulose-5-phosphate or ribose-5-phosphate, respectively. Not involved in dolichol production. This is D-ribitol-5-phosphate cytidylyltransferase (Crppa) from Rattus norvegicus (Rat).